The primary structure comprises 384 residues: Dual specificity protein phosphatase 9 (384 aa).

Serine 16 is subject to Phosphoserine. A Rhodanese domain is found at 18–139 (PRPRLLLLDC…FQAECPHLCE (122 aa)). Positions 203–346 (FPVQILPNLY…LLDFERSLRL (144 aa)) constitute a Tyrosine-protein phosphatase domain. Residue serine 262 is modified to Phosphoserine. Catalysis depends on cysteine 290, which acts as the Phosphocysteine intermediate. The disordered stretch occupies residues 348–384 (ERHSQEQGSGGQASAASNPPSFFTTPTSDGAFELAPT). Residue serine 351 is modified to Phosphoserine. Polar residues predominate over residues 359-375 (QASAASNPPSFFTTPTS).

The protein belongs to the protein-tyrosine phosphatase family. Non-receptor class dual specificity subfamily.

It is found in the cytoplasm. The enzyme catalyses O-phospho-L-tyrosyl-[protein] + H2O = L-tyrosyl-[protein] + phosphate. It carries out the reaction O-phospho-L-seryl-[protein] + H2O = L-seryl-[protein] + phosphate. The catalysed reaction is O-phospho-L-threonyl-[protein] + H2O = L-threonyl-[protein] + phosphate. Inactivates MAP kinases. Has a specificity for the ERK family. This Homo sapiens (Human) protein is Dual specificity protein phosphatase 9 (DUSP9).